The chain runs to 294 residues: N-acetylmuramic acid 6-phosphate etherase (294 aa).

The 164-residue stretch at 54-217 (VIQSFEEEGR…STASMIGVGK (164 aa)) folds into the SIS domain. Glu82 (proton donor) is an active-site residue. Residue Glu113 is part of the active site.

It belongs to the GCKR-like family. MurNAc-6-P etherase subfamily. Homodimer.

The catalysed reaction is N-acetyl-D-muramate 6-phosphate + H2O = N-acetyl-D-glucosamine 6-phosphate + (R)-lactate. The protein operates within amino-sugar metabolism; N-acetylmuramate degradation. Specifically catalyzes the cleavage of the D-lactyl ether substituent of MurNAc 6-phosphate, producing GlcNAc 6-phosphate and D-lactate. This is N-acetylmuramic acid 6-phosphate etherase from Bacillus thuringiensis subsp. konkukian (strain 97-27).